A 160-amino-acid polypeptide reads, in one-letter code: Prostaglandin E synthase 3 (160 aa).

The region spanning 1-90 (MQPASAKWYD…ESGQSWPRLT (90 aa)) is the CS domain. Residue Lys-33 is modified to N6-acetyllysine. A Glycyl lysine isopeptide (Lys-Gly) (interchain with G-Cter in SUMO2) cross-link involves residue Lys-35. Ser-44 is modified (phosphoserine). Lys-65 participates in a covalent cross-link: Glycyl lysine isopeptide (Lys-Gly) (interchain with G-Cter in SUMO2). Phosphoserine occurs at positions 85, 100, 113, and 118. The disordered stretch occupies residues 118 to 160 (SNFDRFSEMMDHMGGDEDVDLPEVDGADDDSQDSDDEKMPDLE). Over residues 122-132 (RFSEMMDHMGG) the composition is skewed to basic and acidic residues. Residues 133 to 153 (DEDVDLPEVDGADDDSQDSDD) show a composition bias toward acidic residues. A phosphoserine mark is found at Ser-148 and Ser-151. The short motif at 157–160 (PDLE) is the PXLE motif element.

The protein belongs to the p23/wos2 family. As to quaternary structure, probably forms a complex composed of chaperones HSP90 and HSP70, co-chaperones STIP1/HOP, CDC37, PPP5C, PTGES3/p23, TSC1 and client protein TSC2. Binds to the progesterone receptor. Interacts with TERT; the interaction, together with HSP90AA1, is required for correct assembly and stabilization of the telomerase holoenzyme complex. Interacts (via PXLE motif) with EGLN1/PHD2, recruiting EGLN1/PHD2 to the HSP90 pathway to facilitate HIF alpha proteins hydroxylation. Interacts with HSP90AA1, FLCN, FNIP1 and FNIP2. Proteolytically cleaved by caspase-7 (CASP7) in response to apoptosis, leading to its inactivation. In terms of tissue distribution, expressed in testis, kidney, bladder and ovary.

The protein resides in the cytoplasm. It carries out the reaction prostaglandin H2 = prostaglandin E2. It participates in lipid metabolism; prostaglandin biosynthesis. In terms of biological role, cytosolic prostaglandin synthase that catalyzes the oxidoreduction of prostaglandin endoperoxide H2 (PGH2) to prostaglandin E2 (PGE2). Molecular chaperone that localizes to genomic response elements in a hormone-dependent manner and disrupts receptor-mediated transcriptional activation, by promoting disassembly of transcriptional regulatory complexes. Facilitates HIF alpha proteins hydroxylation via interaction with EGLN1/PHD2, leading to recruit EGLN1/PHD2 to the HSP90 pathway. The chain is Prostaglandin E synthase 3 (Ptges3) from Mus musculus (Mouse).